A 144-amino-acid polypeptide reads, in one-letter code: HTH-type transcriptional repressor NsrR (144 aa).

The region spanning 2–129 (QLTSFTDYGL…DKHTLLSLID (128 aa)) is the HTH rrf2-type domain. Positions 28–51 (ISKVTEVYGVSRNHMVKIINKLGQ) form a DNA-binding region, H-T-H motif. [2Fe-2S] cluster-binding residues include Cys91, Cys96, and Cys102.

It depends on [2Fe-2S] cluster as a cofactor.

In terms of biological role, nitric oxide-sensitive repressor of genes involved in protecting the cell against nitrosative stress. May require iron for activity. The protein is HTH-type transcriptional repressor NsrR of Photobacterium profundum (strain SS9).